Consider the following 268-residue polypeptide: Undecaprenyl-diphosphatase (268 aa).

A run of 7 helical transmembrane segments spans residues 5–25 (TIAQALMLGVLEGFTEFIPVS), 43–63 (GKAFEILIQLGAILAVLSVYA), 84–104 (LGILIAFLPAAIIGVVAYQII), 107–127 (VLFETPLLICTMLILGGIVLL), 184–204 (AAEFSFFLAMPTMAGAFAYDL), 214–234 (ADLQIIGVGFIAAFVAAVLVV), and 247–267 (ALFGWWRIFIGVLGLIGVLVL).

This sequence belongs to the UppP family.

The protein resides in the cell inner membrane. The catalysed reaction is di-trans,octa-cis-undecaprenyl diphosphate + H2O = di-trans,octa-cis-undecaprenyl phosphate + phosphate + H(+). Its function is as follows. Catalyzes the dephosphorylation of undecaprenyl diphosphate (UPP). Confers resistance to bacitracin. This is Undecaprenyl-diphosphatase from Chelativorans sp. (strain BNC1).